The chain runs to 375 residues: Alcohol dehydrogenase 1 (375 aa).

Position 1 is an N-acetylalanine (Ala-1). Zn(2+) contacts are provided by Cys-46, His-68, Cys-98, Cys-101, Cys-104, Cys-112, and Cys-175. NAD(+)-binding positions include 200–205 (GLGGVG), Asp-224, Lys-229, 293–295 (VGV), and Arg-370.

Belongs to the zinc-containing alcohol dehydrogenase family. Class-I subfamily. As to quaternary structure, homodimer. Zn(2+) serves as cofactor.

It is found in the cytoplasm. It catalyses the reaction a primary alcohol + NAD(+) = an aldehyde + NADH + H(+). It carries out the reaction a secondary alcohol + NAD(+) = a ketone + NADH + H(+). This is Alcohol dehydrogenase 1 from Columba livia (Rock dove).